A 417-amino-acid chain; its full sequence is Serine hydroxymethyltransferase (417 aa).

(6S)-5,6,7,8-tetrahydrofolate-binding positions include leucine 122 and 126 to 128 (GHL). N6-(pyridoxal phosphate)lysine is present on lysine 230. 355 to 357 (SPF) lines the (6S)-5,6,7,8-tetrahydrofolate pocket.

The protein belongs to the SHMT family. In terms of assembly, homodimer. It depends on pyridoxal 5'-phosphate as a cofactor.

It localises to the cytoplasm. It carries out the reaction (6R)-5,10-methylene-5,6,7,8-tetrahydrofolate + glycine + H2O = (6S)-5,6,7,8-tetrahydrofolate + L-serine. It participates in one-carbon metabolism; tetrahydrofolate interconversion. It functions in the pathway amino-acid biosynthesis; glycine biosynthesis; glycine from L-serine: step 1/1. In terms of biological role, catalyzes the reversible interconversion of serine and glycine with tetrahydrofolate (THF) serving as the one-carbon carrier. This reaction serves as the major source of one-carbon groups required for the biosynthesis of purines, thymidylate, methionine, and other important biomolecules. Also exhibits THF-independent aldolase activity toward beta-hydroxyamino acids, producing glycine and aldehydes, via a retro-aldol mechanism. In Francisella tularensis subsp. holarctica (strain LVS), this protein is Serine hydroxymethyltransferase.